The following is a 709-amino-acid chain: PP2C-like domain-containing protein CG9801 (709 aa).

Disordered regions lie at residues 121-222 (DCYG…NSER), 503-530 (LHPSTPPTRPARQSKAESPPNNAPSRPK), and 678-709 (GGGEEHNNGNENGDGGAISPVLQSKEFKETNF). Over residues 130 to 143 (PPVQVATQNSTRLT) the composition is skewed to polar residues. A compositionally biased stretch (low complexity) spans 182–196 (ANLAAASAGTDAGKA). The segment covering 197-217 (NSDQNNRNVLNAKTEVSTDGD) has biased composition (polar residues). The PPM-type phosphatase domain maps to 259–503 (SVSLYETNML…KSASAIYARL (245 aa)).

This Drosophila melanogaster (Fruit fly) protein is PP2C-like domain-containing protein CG9801.